We begin with the raw amino-acid sequence, 730 residues long: Polyribonucleotide nucleotidyltransferase (730 aa).

Positions 494 and 500 each coordinate Mg(2+). The region spanning 561 to 622 (PRIQTIQIDP…EAMNRAIQEI (62 aa)) is the KH domain. In terms of domain architecture, S1 motif spans 642 to 711 (GKIYTGRVTG…RSGKVRLSRK (70 aa)).

The protein belongs to the polyribonucleotide nucleotidyltransferase family. Mg(2+) serves as cofactor.

The protein localises to the cytoplasm. It catalyses the reaction RNA(n+1) + phosphate = RNA(n) + a ribonucleoside 5'-diphosphate. Functionally, involved in mRNA degradation. Catalyzes the phosphorolysis of single-stranded polyribonucleotides processively in the 3'- to 5'-direction. The polypeptide is Polyribonucleotide nucleotidyltransferase (Opitutus terrae (strain DSM 11246 / JCM 15787 / PB90-1)).